The sequence spans 249 residues: Expansin-A18 (249 aa).

The signal sequence occupies residues 1–21 (MGNIVLQLLAILALCIAPARS). One can recognise an Expansin-like EG45 domain in the interval 41–154 (GGACGYGNLY…QQVKCWRSGG (114 aa)). The N-linked (GlcNAc...) asparagine glycan is linked to Asn116. In terms of domain architecture, Expansin-like CBD spans 164 to 243 (YFELVLVTNM…GWSFGQTFST (80 aa)).

This sequence belongs to the expansin family. Expansin A subfamily. Expressed in roots.

Its subcellular location is the secreted. The protein resides in the cell wall. It is found in the membrane. Its function is as follows. May cause loosening and extension of plant cell walls by disrupting non-covalent bonding between cellulose microfibrils and matrix glucans. No enzymatic activity has been found. May be required for rapid internodal elongation in deepwater rice during submergence. This chain is Expansin-A18 (EXPA18), found in Oryza sativa subsp. japonica (Rice).